A 269-amino-acid polypeptide reads, in one-letter code: Type II restriction enzyme SfiI (269 aa).

The enzyme catalyses Endonucleolytic cleavage of DNA to give specific double-stranded fragments with terminal 5'-phosphates.. Its function is as follows. An F and P subtype restriction enzyme that recognizes the double-stranded sequence 5'-GGCCN(5)GGCC-3' and cleaves before N-9. In Streptomyces fimbriatus, this protein is Type II restriction enzyme SfiI (sfiIR).